The primary structure comprises 238 residues: Ribonuclease PH (238 aa).

Residues arginine 86 and 124 to 126 contribute to the phosphate site; that span reads GTR.

It belongs to the RNase PH family. Homohexameric ring arranged as a trimer of dimers.

It catalyses the reaction tRNA(n+1) + phosphate = tRNA(n) + a ribonucleoside 5'-diphosphate. Phosphorolytic 3'-5' exoribonuclease that plays an important role in tRNA 3'-end maturation. Removes nucleotide residues following the 3'-CCA terminus of tRNAs; can also add nucleotides to the ends of RNA molecules by using nucleoside diphosphates as substrates, but this may not be physiologically important. Probably plays a role in initiation of 16S rRNA degradation (leading to ribosome degradation) during starvation. This Geotalea uraniireducens (strain Rf4) (Geobacter uraniireducens) protein is Ribonuclease PH.